Here is a 160-residue protein sequence, read N- to C-terminus: MMPAKLQLDVLRTLQSSARHGTQTLKNSTFLERFHNNRIVFCLPFFLALFFVPVQKVLQHLCLRFTQVAPYFKIQLFDLPSRHAENLAPLLASCRIQYTNCFSSSSNGQVPSIISLYLRVDLSPFYAKIFQISYRVPMIWLDVFQVFFVFLVISQHSLHS.

The next 2 membrane-spanning stretches (helical) occupy residues 39–59 and 136–156; these read IVFC…KVLQ and VPMI…ISQH.

This sequence belongs to the UPF0479 family.

The protein resides in the membrane. This Saccharomyces cerevisiae (strain ATCC 204508 / S288c) (Baker's yeast) protein is Putative UPF0479 protein YIL177W-A.